Consider the following 435-residue polypeptide: GTPase Obg (435 aa).

The region spanning 1–158 (MFLDTAKVSV…RQLELELKIL (158 aa)) is the Obg domain. The 178-residue stretch at 159-336 (ADVGLVGFPS…LLEATAELLA (178 aa)) folds into the OBG-type G domain. GTP is bound by residues 165–172 (GFPSVGKS), 190–194 (FTTIV), 212–215 (DLPG), 282–285 (NKMD), and 317–319 (SSL). Mg(2+)-binding residues include serine 172 and threonine 192. An OCT domain is found at 357–435 (GFAAEEKAFE…IGKFEFEFVD (79 aa)).

This sequence belongs to the TRAFAC class OBG-HflX-like GTPase superfamily. OBG GTPase family. As to quaternary structure, monomer. Mg(2+) is required as a cofactor.

Its subcellular location is the cytoplasm. Functionally, an essential GTPase which binds GTP, GDP and possibly (p)ppGpp with moderate affinity, with high nucleotide exchange rates and a fairly low GTP hydrolysis rate. Plays a role in control of the cell cycle, stress response, ribosome biogenesis and in those bacteria that undergo differentiation, in morphogenesis control. The polypeptide is GTPase Obg (Streptococcus equi subsp. zooepidemicus (strain MGCS10565)).